Consider the following 355-residue polypeptide: Putative [LysW]-L-2-aminoadipate/[LysW]-L-glutamate phosphate reductase (355 aa).

Position 13-16 (serine 13–threonine 16) interacts with NADP(+). Cysteine 153 is a catalytic residue. Asparagine 323 is a binding site for NADP(+).

The protein belongs to the NAGSA dehydrogenase family. Type 1 subfamily. LysY sub-subfamily.

The protein resides in the cytoplasm. The enzyme catalyses [amino-group carrier protein]-C-terminal-N-(1-carboxy-5-oxopentan-1-yl)-L-glutamine + phosphate + NADP(+) = [amino-group carrier protein]-C-terminal-N-(1-carboxy-5-phosphooxy-5-oxopentan-1-yl)-L-glutamine + NADPH + H(+). The catalysed reaction is [amino-group carrier protein]-C-terminal-gamma-(L-glutamyl-5-semialdehyde)-L-glutamate + phosphate + NADP(+) = [amino-group carrier protein]-C-terminal-gamma-(5-phospho-L-glutamyl)-L-glutamate + NADPH + H(+). It participates in amino-acid biosynthesis; L-lysine biosynthesis via AAA pathway; L-lysine from L-alpha-aminoadipate (Thermus route): step 3/5. Its pathway is amino-acid biosynthesis; L-arginine biosynthesis. Functionally, involved in both the arginine and lysine biosynthetic pathways. This chain is Putative [LysW]-L-2-aminoadipate/[LysW]-L-glutamate phosphate reductase, found in Aeropyrum pernix (strain ATCC 700893 / DSM 11879 / JCM 9820 / NBRC 100138 / K1).